The primary structure comprises 503 residues: Transcription termination/antitermination protein NusA (503 aa).

Positions 139 to 203 constitute an S1 motif domain; it reads GEIINGIVKR…KGPQIFLSRV (65 aa). Positions 308-378 constitute a KH domain; it reads RHKVEVVVSQ…LDVEEVIGQL (71 aa).

The protein belongs to the NusA family. In terms of assembly, monomer. Binds directly to the core enzyme of the DNA-dependent RNA polymerase and to nascent RNA.

It is found in the cytoplasm. In terms of biological role, participates in both transcription termination and antitermination. This is Transcription termination/antitermination protein NusA from Rickettsia conorii (strain ATCC VR-613 / Malish 7).